The primary structure comprises 252 residues: Type II secretion system protein N (252 aa).

Topologically, residues Met1–Lys4 are cytoplasmic. A helical membrane pass occupies residues Val5–Ala25. Over Thr26 to Ile252 the chain is Periplasmic.

This sequence belongs to the GSP N family.

It localises to the cell inner membrane. Involved in a type II secretion system (T2SS, formerly general secretion pathway, GSP) for the export of proteins. The polypeptide is Type II secretion system protein N (exeN) (Aeromonas hydrophila).